Reading from the N-terminus, the 411-residue chain is MKKFKIRKLMARVLALALVFSTFFMVSKVDANAASYNLMETYGAKYGYSGNCVHTHMLRDSRIVNAIKKDSNIVTLGNEMKPDYLLGSRQATLISVDEAKRLGYYIPSNYKERYVPKIDFRTVDEAVKICYENGLKMRGHTLVWHSQTPTWLFRENYSGNGRFVNTATMDARLEFYVKSVMGHFYSGKYGSTLVYWDVCNETLHAQNSGWEAVYGSNKTNAVYVKKAFNYAYQVLEQYKLTNSVKLFYNDYNTYMEVNDVIKLVNYINQGKKVCAGVGMQSHLGTGFPSVDYYTNALNSFLRAGFEVQITELDITNKGDYDLNNYAYRLFKNINAAKKNGGNISCITWWGPSDAETWIRNEKPLIWSNIGVAKPAYDEVVKAFTETFGNPGSFTPQPTITPQPTPTPSGQT.

The N-terminal stretch at 1–33 is a signal peptide; it reads MKKFKIRKLMARVLALALVFSTFFMVSKVDANA. A GH10 domain is found at 34-382; the sequence is ASYNLMETYG…KPAYDEVVKA (349 aa). E201 functions as the Proton donor in the catalytic mechanism. E311 serves as the catalytic Nucleophile. The disordered stretch occupies residues 387-411; the sequence is FGNPGSFTPQPTITPQPTPTPSGQT. A compositionally biased stretch (pro residues) spans 398 to 411; sequence TITPQPTPTPSGQT.

Belongs to the glycosyl hydrolase 10 (cellulase F) family.

The catalysed reaction is Endohydrolysis of (1-&gt;4)-beta-D-xylosidic linkages in xylans.. Its pathway is glycan degradation; xylan degradation. In terms of biological role, b.fibrisolvens is located in the rumen of ruminant animals, where it contributes to the animal's digestion of plant material by hydrolyzing hemicellulose with its xylanases. The protein is Endo-1,4-beta-xylanase A (xynA) of Butyrivibrio fibrisolvens.